The following is a 198-amino-acid chain: Protein C4 (198 aa).

Positions 1-36 (MFNPRHPGGEFFGRKHHRRHAPDGRSSSSSSSSSEC) are disordered.

In Giardia intestinalis (Giardia lamblia), this protein is Protein C4 (C4).